Reading from the N-terminus, the 700-residue chain is Elongation factor G (700 aa).

A tr-type G domain is found at 8–290 (DRYRNVGIMA…AMIMYMPSPL (283 aa)). Residues 17–24 (AHIDAGKT), 88–92 (DTPGH), and 142–145 (NKMD) each bind GTP.

This sequence belongs to the TRAFAC class translation factor GTPase superfamily. Classic translation factor GTPase family. EF-G/EF-2 subfamily.

The protein resides in the cytoplasm. Functionally, catalyzes the GTP-dependent ribosomal translocation step during translation elongation. During this step, the ribosome changes from the pre-translocational (PRE) to the post-translocational (POST) state as the newly formed A-site-bound peptidyl-tRNA and P-site-bound deacylated tRNA move to the P and E sites, respectively. Catalyzes the coordinated movement of the two tRNA molecules, the mRNA and conformational changes in the ribosome. The protein is Elongation factor G of Vesicomyosocius okutanii subsp. Calyptogena okutanii (strain HA).